The sequence spans 231 residues: MKNNFLDKVKDRLIISCQALADEPLHSSFIMARMARAAYEAGASAIRANSVVDVQAIMDTVELPVIGLDKVDYSDAPIYITPTIKEMRGIAATGAAVVACDVTGRPRPHGEQLATIVETMRTEYPDTLLMADTASLDDVKEANRLGFDIIGTTMYGYTPATEGCNIADNDFEYLKQVLAMSKAPVIAEGKIDSPEKAVTALKLGCHSVVVGSSITRPQLIAKTYIDAVNEL.

It belongs to the NanE family.

It catalyses the reaction an N-acyl-D-glucosamine 6-phosphate = an N-acyl-D-mannosamine 6-phosphate. It functions in the pathway amino-sugar metabolism; N-acetylneuraminate degradation; D-fructose 6-phosphate from N-acetylneuraminate: step 3/5. Its function is as follows. Converts N-acetylmannosamine-6-phosphate (ManNAc-6-P) to N-acetylglucosamine-6-phosphate (GlcNAc-6-P). The protein is Putative N-acetylmannosamine-6-phosphate 2-epimerase of Latilactobacillus sakei subsp. sakei (strain 23K) (Lactobacillus sakei subsp. sakei).